The chain runs to 1072 residues: E3 ubiquitin-protein ligase RNF31 (1072 aa).

The interval M1–R485 is polyubiquitin-binding. The PUB domain occupies T71–D142. Residues Q263–S290 form a disordered region. Residues T265 to Q280 are compositionally biased toward polar residues. A compositionally biased stretch (low complexity) spans S281 to S290. 2 consecutive RanBP2-type zinc fingers follow at residues S299–C329 and A350–A379. Position 383 is a phosphoserine (S383). A RanBP2-type 3 zinc finger spans residues Q409–P438. Positions H443–M484 are disordered. The span at R463–S472 shows a compositional bias: low complexity. A Phosphoserine modification is found at S466. A compositionally biased stretch (basic and acidic residues) spans D475 to M484. An interaction with RBCK1 region spans residues G563–R616. The 52-residue stretch at N564–Q615 folds into the UBA domain. The TRIAD supradomain stretch occupies residues L695–D929. Residues C699, C702, C717, C719, C722, and C725 each contribute to the Zn(2+) site. Residues C699–R749 form an RING-type 1 zinc finger. K735 is covalently cross-linked ((Microbial infection) Glycyl lysine isopeptide (Lys-Gly) (interchain with G-Cter in ubiquitin)). Zn(2+)-binding residues include C744 and C747. Residues A779–C841 form an IBR-type zinc finger. A (Microbial infection) Glycyl lysine isopeptide (Lys-Gly) (interchain with G-Cter in ubiquitin) cross-link involves residue K783. Positions 799, 802, 817, 820, 825, 828, 836, 841, 871, and 874 each coordinate Zn(2+). The segment at C871–C901 adopts an RING-type 2; atypical zinc-finger fold. A (Microbial infection) Glycyl lysine isopeptide (Lys-Gly) (interchain with G-Cter in ubiquitin) cross-link involves residue K875. C885 is a catalytic residue. Zn(2+)-binding residues include C890, C893, C898, C901, C916, and H925. The tract at residues K910–K1072 is LDD domain.

This sequence belongs to the RBR family. As to quaternary structure, component of the LUBAC complex (linear ubiquitin chain assembly complex) which consists of SHARPIN, RBCK1 and RNF31. LUBAC has a MW of approximately 600 kDa suggesting a heteromultimeric assembly of its subunits. Associates with the TNF-R1 signaling complex (TNF-RSC) in a stimulation-dependent manner. Interacts (via the PUB domain) with OTULIN (via the PIM motif); the interaction is direct. Interacts (via the PUB domain) with VCP (via the PIM motif). Interacts (via the PUB domain) with SPATA2 (via the PIM motif); interaction is direct and bridges RNF31 and CYLD. Interacts with CYLD; the interaction is indirect and is mediated via SPATA2. Interacts with MUSK. Interacts with CARD11, promoting linear ubiquitination of BCL10. (Microbial infection) Interacts with S.flexneri E3 ubiquitin-protein ligases IpaH1.4 and IpaH2.5, leading to its ubiquitination. In terms of processing, autoubiquitinated. Interaction with OTULIN is required to suppress formation of 'Met-1'-linked polyubiquitin chains and prevent subsequent inactivation of the LUBAC complex. Post-translationally, cleaved by caspase during apoptosis. (Microbial infection) Ubiquitinated by S.flexneri E3 ubiquitin-protein ligases IpaH1.4 and IpaH2.5, leading to its degradation by the proteasome, thereby preventing formation of the bacterial ubiquitin coat and activation of innate immunity. Expressed in both normal and transformed breast epithelial cell lines.

It localises to the cytoplasm. It carries out the reaction [E2 ubiquitin-conjugating enzyme]-S-ubiquitinyl-L-cysteine + [acceptor protein]-L-lysine = [E2 ubiquitin-conjugating enzyme]-L-cysteine + [acceptor protein]-N(6)-ubiquitinyl-L-lysine.. It participates in protein modification; protein ubiquitination. In terms of biological role, E3 ubiquitin-protein ligase component of the LUBAC complex which conjugates linear ('Met-1'-linked) polyubiquitin chains to substrates and plays a key role in NF-kappa-B activation and regulation of inflammation. LUBAC conjugates linear polyubiquitin to IKBKG and RIPK1 and is involved in activation of the canonical NF-kappa-B and the JNK signaling pathways. Linear ubiquitination mediated by the LUBAC complex interferes with TNF-induced cell death and thereby prevents inflammation. LUBAC is recruited to the TNF-R1 signaling complex (TNF-RSC) following polyubiquitination of TNF-RSC components by BIRC2 and/or BIRC3 and to conjugate linear polyubiquitin to IKBKG and possibly other components contributing to the stability of the complex. The LUBAC complex is also involved in innate immunity by conjugating linear polyubiquitin chains at the surface of bacteria invading the cytosol to form the ubiquitin coat surrounding bacteria. LUBAC is not able to initiate formation of the bacterial ubiquitin coat, and can only promote formation of linear polyubiquitins on pre-existing ubiquitin. Recruited to the surface of bacteria by RNF213, which initiates the bacterial ubiquitin coat. The bacterial ubiquitin coat acts as an 'eat-me' signal for xenophagy and promotes NF-kappa-B activation. Together with OTULIN, the LUBAC complex regulates the canonical Wnt signaling during angiogenesis. RNF31 is required for linear ubiquitination of BCL10, thereby promoting TCR-induced NF-kappa-B activation. Binds polyubiquitin of different linkage types. This is E3 ubiquitin-protein ligase RNF31 from Homo sapiens (Human).